An 806-amino-acid polypeptide reads, in one-letter code: ATP-dependent zinc metalloprotease FTSH 11, chloroplastic/mitochondrial (806 aa).

The N-terminal 63 residues, 1 to 63 (MSSSTLQASL…RFRPLPCSLR (63 aa)), are a transit peptide targeting the chloroplast and mitochondrion. The span at 106–116 (FVGGEETKSGG) shows a compositional bias: basic and acidic residues. The interval 106-130 (FVGGEETKSGGEEAEVSNGVTEGKE) is disordered. A helical transmembrane segment spans residues 301-321 (LVSTILFTVAVGLVWIMGAAA). 402–409 (GAPGTGKT) is an ATP binding site. Histidine 620 lines the Zn(2+) pocket. Residue glutamate 621 is part of the active site. Residues histidine 624 and aspartate 698 each coordinate Zn(2+).

This sequence in the N-terminal section; belongs to the AAA ATPase family. The protein in the C-terminal section; belongs to the peptidase M41 family. As to quaternary structure, homooligomer. Zn(2+) serves as cofactor.

It localises to the mitochondrion inner membrane. It is found in the plastid. The protein localises to the chloroplast thylakoid membrane. Functionally, probable ATP-dependent zinc metallopeptidase. Involved in the assembly and/or stability of the complexes I and V. Involved in thermotolerance but not in high light stress resistance or in the assembly/stability of the complexes I and V of the mitochondrial oxidative phosphorylation system. This Arabidopsis thaliana (Mouse-ear cress) protein is ATP-dependent zinc metalloprotease FTSH 11, chloroplastic/mitochondrial (FTSH11).